We begin with the raw amino-acid sequence, 90 residues long: Small ribosomal subunit protein uS15c (90 aa).

Belongs to the universal ribosomal protein uS15 family. In terms of assembly, part of the 30S ribosomal subunit.

The protein localises to the plastid. Its subcellular location is the chloroplast. The protein is Small ribosomal subunit protein uS15c (rps15) of Glycine max (Soybean).